Reading from the N-terminus, the 457-residue chain is tRNA-2-methylthio-N(6)-dimethylallyladenosine synthase (457 aa).

One can recognise an MTTase N-terminal domain in the interval K3–E120. The [4Fe-4S] cluster site is built by C12, C49, C83, C157, C161, and C164. Residues R143–R377 form the Radical SAM core domain. Residues Q380–L447 enclose the TRAM domain.

Belongs to the methylthiotransferase family. MiaB subfamily. As to quaternary structure, monomer. The cofactor is [4Fe-4S] cluster.

Its subcellular location is the cytoplasm. The enzyme catalyses N(6)-dimethylallyladenosine(37) in tRNA + (sulfur carrier)-SH + AH2 + 2 S-adenosyl-L-methionine = 2-methylsulfanyl-N(6)-dimethylallyladenosine(37) in tRNA + (sulfur carrier)-H + 5'-deoxyadenosine + L-methionine + A + S-adenosyl-L-homocysteine + 2 H(+). Its function is as follows. Catalyzes the methylthiolation of N6-(dimethylallyl)adenosine (i(6)A), leading to the formation of 2-methylthio-N6-(dimethylallyl)adenosine (ms(2)i(6)A) at position 37 in tRNAs that read codons beginning with uridine. The protein is tRNA-2-methylthio-N(6)-dimethylallyladenosine synthase of Burkholderia thailandensis (strain ATCC 700388 / DSM 13276 / CCUG 48851 / CIP 106301 / E264).